The primary structure comprises 863 residues: MICAL-like protein 1 (863 aa).

Residues 2–108 (AGPRGALLAW…YVSQYYNHFC (107 aa)) form the Calponin-homology (CH) domain. Disordered regions lie at residues 119 to 162 (RKGL…TPSS) and 224 to 670 (GTRS…PLIK). Residues 125-135 (CSPPSVAPTPV) are compositionally biased toward pro residues. Low complexity-rich tracts occupy residues 143 to 159 (GEEL…TGQT) and 224 to 244 (GTRS…HQQQ). An LIM zinc-binding domain is found at 162–225 (STCAACQQHV…EHCARLGPGT (64 aa)). Ser295 and Ser309 each carry phosphoserine. Phosphothreonine is present on Thr318. The span at 325–340 (LQQENLVEQAGSSSLV) shows a compositional bias: polar residues. Residues 384–395 (APLPPSSSPGPP) are compositionally biased toward pro residues. Ser391 bears the Phosphoserine mark. An NPF1 motif is present at residues 425–427 (NPF). The span at 427–438 (FEEEEEDKEEEA) shows a compositional bias: acidic residues. Low complexity predominate over residues 439–450 (PAAPSLATSPAL). Phosphothreonine occurs at positions 467 and 469. Residues Ser470, Ser471, Ser484, and Ser486 each carry the phosphoserine modification. 3 stretches are compositionally biased toward low complexity: residues 482–495 (APSA…ASRL), 505–520 (PSPA…ESAS), and 553–566 (SLST…SGEL). Residues Ser578 and Ser621 each carry the phosphoserine modification. Residues 633–635 (NPF) carry the NPF2 motif. Residues 638–656 (KPSPAASPATKKATKGSKP) show a composition bias toward low complexity. Residues 652 to 863 (KGSKPVRPPA…AKSKSPRDKS (212 aa)) form a mediates the interaction with RAB13 and RAB35 and intramolecular interaction with the CH domain region. One can recognise a bMERB domain in the interval 671 to 818 (RKVQADQYIP…EEEEDKMLEA (148 aa)). The stretch at 682–711 (EDIHGEMDTIERRLDALEHRGVLLEEKLRG) forms a coiled coil. The interval 700–863 (HRGVLLEEKL…AKSKSPRDKS (164 aa)) is necessary and sufficient to associate with tubular recycling endosome membranes, mediate phosphatidic acid-binding and membrane tubulation. The residue at position 740 (Ser740) is a Phosphoserine. The stretch at 785 to 830 (MQELVTLIEQRNAIINCLDEDRQREEEEDKMLEAMIKKKEFQREAE) forms a coiled coil.

As to quaternary structure, homooligomer. Interacts (via NPF1 motif) with EHD1 (via EH domain); the interaction is direct and probably recruits EHD1 to membranes. Interacts with EHD3 (via EH domain). Interacts with RAB35 (GTP-bound form); the interaction is direct and probably recruits MICALL1 to membranes. Interacts with ACAP2; the interaction is indirect through RAB35. Interacts with RAB8A (GTP-bound form); regulates RAB8A association with recycling endosomes. Interacts with RAB13 (GTP-bound form). Interacts with ARF6 (GTP-bound form). Interacts with PACSIN2 (via the SH3 domain). Interacts with DPYSL2.

The protein resides in the recycling endosome membrane. Its subcellular location is the late endosome membrane. It localises to the cell projection. The protein localises to the cilium membrane. It is found in the cytoplasm. The protein resides in the cytoskeleton. Its subcellular location is the microtubule organizing center. It localises to the centrosome. The protein localises to the centriole. Its function is as follows. Lipid-binding protein with higher affinity for phosphatidic acid, a lipid enriched in recycling endosome membranes. On endosome membranes, acts as a downstream effector of Rab proteins recruiting cytosolic proteins to regulate membrane tubulation. Involved in a late step of receptor-mediated endocytosis regulating for instance endocytosed-EGF receptor trafficking. Alternatively, regulates slow endocytic recycling of endocytosed proteins back to the plasma membrane. Also involved in cargo protein delivery to the plasma membrane. Plays a role in ciliogenesis coordination, recruits EHD1 to primary cilium where it is anchored to the centriole through interaction with tubulins. May indirectly play a role in neurite outgrowth. The protein is MICAL-like protein 1 (MICALL1) of Homo sapiens (Human).